The sequence spans 248 residues: Large ribosomal subunit protein uL4 (248 aa).

Disordered regions lie at residues 72–103 and 173–210; these read RSEN…KSLN and GRSV…RNLS. A compositionally biased stretch (basic and acidic residues) spans 92–103; sequence PKAEKDQTKSLN. Basic residues predominate over residues 177–189; it reads RAGRGKTRGRKYS.

Belongs to the universal ribosomal protein uL4 family. As to quaternary structure, part of the 50S ribosomal subunit.

In terms of biological role, one of the primary rRNA binding proteins, this protein initially binds near the 5'-end of the 23S rRNA. It is important during the early stages of 50S assembly. It makes multiple contacts with different domains of the 23S rRNA in the assembled 50S subunit and ribosome. Functionally, forms part of the polypeptide exit tunnel. This Halorubrum lacusprofundi (strain ATCC 49239 / DSM 5036 / JCM 8891 / ACAM 34) protein is Large ribosomal subunit protein uL4.